The following is a 317-amino-acid chain: 1D-myo-inositol 2-acetamido-2-deoxy-alpha-D-glucopyranoside deacetylase (317 aa).

Histidine 15, aspartate 18, and histidine 154 together coordinate Zn(2+). The segment at 289–317 is disordered; sequence QDLDNRNPNSQPPADQAREDHLLTGLGFA.

This sequence belongs to the MshB deacetylase family. Requires Zn(2+) as cofactor.

The enzyme catalyses 1D-myo-inositol 2-acetamido-2-deoxy-alpha-D-glucopyranoside + H2O = 1D-myo-inositol 2-amino-2-deoxy-alpha-D-glucopyranoside + acetate. In terms of biological role, catalyzes the deacetylation of 1D-myo-inositol 2-acetamido-2-deoxy-alpha-D-glucopyranoside (GlcNAc-Ins) in the mycothiol biosynthesis pathway. The protein is 1D-myo-inositol 2-acetamido-2-deoxy-alpha-D-glucopyranoside deacetylase of Segniliparus rotundus (strain ATCC BAA-972 / CDC 1076 / CIP 108378 / DSM 44985 / JCM 13578).